Consider the following 163-residue polypeptide: D-aminoacyl-tRNA deacylase (163 aa).

The Gly-cisPro motif, important for rejection of L-amino acids motif lies at 141–142 (GP).

The protein belongs to the DTD family. In terms of assembly, homodimer.

The protein localises to the cytoplasm. The enzyme catalyses glycyl-tRNA(Ala) + H2O = tRNA(Ala) + glycine + H(+). The catalysed reaction is a D-aminoacyl-tRNA + H2O = a tRNA + a D-alpha-amino acid + H(+). In terms of biological role, an aminoacyl-tRNA editing enzyme that deacylates mischarged D-aminoacyl-tRNAs. Also deacylates mischarged glycyl-tRNA(Ala), protecting cells against glycine mischarging by AlaRS. Acts via tRNA-based rather than protein-based catalysis; rejects L-amino acids rather than detecting D-amino acids in the active site. By recycling D-aminoacyl-tRNA to D-amino acids and free tRNA molecules, this enzyme counteracts the toxicity associated with the formation of D-aminoacyl-tRNA entities in vivo and helps enforce protein L-homochirality. This Neisseria gonorrhoeae (strain ATCC 700825 / FA 1090) protein is D-aminoacyl-tRNA deacylase.